The sequence spans 258 residues: UBX domain-containing protein 2A (258 aa).

A compositionally biased stretch (basic and acidic residues) spans 1 to 14; it reads MKEVDNLDSIKEEW. The tract at residues 1–30 is disordered; that stretch reads MKEVDNLDSIKEEWACETGPPDSQPLNDNQ. The tract at residues 1–152 is required for interaction with CHRNA3; the sequence is MKEVDNLDSI…SATPRIVSKA (152 aa). The tract at residues 1 to 165 is required for inhibition of CHRNA3 ubiquitination and translocation of CHRNA3 to the plasma membrane resulting in an increase in acetylcholine-gated nicotinic acetylcholine receptor currents; that stretch reads MKEVDNLDSI…EVDNKSTLSA (165 aa). In terms of domain architecture, SEP spans 61–125; sequence QVDVNIKLWK…VEDKKNEVCM (65 aa). The required for interaction with VCP stretch occupies residues 168–258; the sequence is LNNLEPITRI…QKTAEPFRKL (91 aa). The 78-residue stretch at 170–247 folds into the UBX domain; that stretch reads NLEPITRIQI…DLKNAVIIQR (78 aa).

Part of a complex composed of STUB1/CHIP, VCP/p97, CHRNA3, and UBXN2A that modulates the ubiquitination and endoplasmic reticulum-associated degradation (ERAD) of CHRNA3. Within the complex UBXN2A acts as a scaffold protein required for the interaction of CHRNA3 with VCP/p97, this interaction also inhibits CHRNA3 ubiquitination by STUB1/CHIP and subsequently ERAD. Interacts (via SEP domain) with CHRNA3 and interacts (via UBX domain) with VCP/P97; these interactions are required for the interaction of CHRNA3 with the STUB1-VCP-UBXN2A complex. Interacts with HSPA9/MOT-2 (via SBD domain); the interaction inhibits HSPA9/MOT-2 interaction with and degradation of p53, thereby promotes p53 translocation to the nucleus. Interacts with RICTOR. In terms of processing, ubiquitinated. As to expression, expressed in the prefrontal cortex (at protein level). Expressed in the habenula and hippocampus (at protein level). Expressed in peripheral ganglia.

It localises to the golgi apparatus. The protein resides in the endoplasmic reticulum. The protein localises to the perikaryon. Its subcellular location is the cell projection. It is found in the dendrite. It localises to the nucleus. The protein resides in the cytoplasm. In terms of biological role, acts to repress the ubiquitination and subsequent endoplasmic reticulum-associated degradation of CHRNA3 by the STUB1-VCP-UBXN2A complex in cortical neurons. Also acts to promote the translocation of CHRNA3 to the plasma membrane and subsequently increases plasma membrane acetylcholine-gated ion-channel activation. Plays a role in the inhibition of STUB1-mediated TP53 degradation, via its interaction with HSPA9 which acts to inhibit TP53 binding to HSPA9. Positively mediates the ubiquitination and proteosomal degradation of RICTOR, may thereby act as a negative regulator of the mTORC2 pathway. This chain is UBX domain-containing protein 2A, found in Mus musculus (Mouse).